The chain runs to 308 residues: E3 ubiquitin-protein ligase SINAT2 (308 aa).

The RING-type zinc finger occupies 60–96 (CPVCTNLMYPPIHQCPNGHTLCSNCKLRVQNTCPTCR). The SBD stretch occupies residues 110-303 (VAESLEVPCR…QELKLRVTGR (194 aa)). The SIAH-type zinc-finger motif lies at 113 to 173 (SLEVPCRYQN…LVVHLKDDHK (61 aa)). Zn(2+)-binding residues include Cys118, Cys125, His137, Cys141, Cys148, Cys155, His167, and His172.

Belongs to the SINA (Seven in absentia) family. In terms of assembly, interacts with RAP2-2. Interacts with SINAT6. Interacts with ATG6 and TRAF1A. Interacts with WAV3. Interacts with FREE1. Interacts with ELC/VPS23A.

The protein localises to the endosome. It localises to the multivesicular body. Its subcellular location is the cytoplasmic vesicle. It is found in the autophagosome. The enzyme catalyses S-ubiquitinyl-[E2 ubiquitin-conjugating enzyme]-L-cysteine + [acceptor protein]-L-lysine = [E2 ubiquitin-conjugating enzyme]-L-cysteine + N(6)-ubiquitinyl-[acceptor protein]-L-lysine.. Its pathway is protein modification; protein ubiquitination. E3 ubiquitin-protein ligase that mediates ubiquitination and subsequent proteasomal degradation of target proteins. E3 ubiquitin ligases accept ubiquitin from an E2 ubiquitin-conjugating enzyme in the form of a thioester and then directly transfers the ubiquitin to targeted substrates. It probably triggers the ubiquitin-mediated degradation of different substrates. Mediates the proteasomal-dependent degradation of ATG6, a component of the autophagosome complex. Requires TRAF1A/MUSE14 and TRAF1B/MUSE13 to target ATG6 for ubiquitination and subsequent regulation of autophagosome assembly. Modulates directly the ubiquitination and proteasomal-dependent degradation of FREE1, a component of the ESCRT-I complex. Modulates directly the ubiquitination and proteasomal-dependent degradation of ELC/VPS23A, a component of the ESCRT-I complex. This Arabidopsis thaliana (Mouse-ear cress) protein is E3 ubiquitin-protein ligase SINAT2.